Consider the following 473-residue polypeptide: Photosystem II CP43 reaction center protein (473 aa).

The propeptide occupies 1–14; sequence MKILYSPRRFYPVE. At threonine 15 the chain carries N-acetylthreonine. The residue at position 15 (threonine 15) is a Phosphothreonine. Transmembrane regions (helical) follow at residues 69 to 93, 134 to 155, 178 to 200, 255 to 275, and 291 to 312; these read LFEVAHFVPEKPMYEQGLILLPHLA, IIGPETLEESFPFFGYAWKDKN, KALYFGGVYDTWAPGGGDVRKIT, KPFAWARRAFVWSGEAYLSYS, and WFNNTAYPSEFYGPTGPEASQA. Glutamate 367 contributes to the [CaMn4O5] cluster binding site. Residues 447 to 471 form a helical membrane-spanning segment; it reads RARAAAAGFEKGIDRDFEPVLSTTP.

It belongs to the PsbB/PsbC family. PsbC subfamily. PSII is composed of 1 copy each of membrane proteins PsbA, PsbB, PsbC, PsbD, PsbE, PsbF, PsbH, PsbI, PsbJ, PsbK, PsbL, PsbM, PsbT, PsbX, PsbY, PsbZ, Psb30/Ycf12, at least 3 peripheral proteins of the oxygen-evolving complex and a large number of cofactors. It forms dimeric complexes. Binds multiple chlorophylls and provides some of the ligands for the Ca-4Mn-5O cluster of the oxygen-evolving complex. It may also provide a ligand for a Cl- that is required for oxygen evolution. PSII binds additional chlorophylls, carotenoids and specific lipids. serves as cofactor.

The protein localises to the plastid. The protein resides in the chloroplast thylakoid membrane. Its function is as follows. One of the components of the core complex of photosystem II (PSII). It binds chlorophyll and helps catalyze the primary light-induced photochemical processes of PSII. PSII is a light-driven water:plastoquinone oxidoreductase, using light energy to abstract electrons from H(2)O, generating O(2) and a proton gradient subsequently used for ATP formation. The chain is Photosystem II CP43 reaction center protein from Huperzia lucidula (Shining clubmoss).